The chain runs to 118 residues: Appetite-regulating hormone (118 aa).

The N-terminal stretch at 1-24 (MPSTGTICSLLLLSVLLMADLAMA) is a signal peptide. Ser-27 is lipidated: O-decanoyl serine; alternate. Ser-27 is lipidated: O-hexanoyl serine; alternate. Residue Ser-27 is the site of O-octanoyl serine; alternate attachment. Residues 29-50 (LSPEHQKVQQRKESKKPAAKLK) form a disordered region. Basic and acidic residues predominate over residues 32 to 44 (EHQKVQQRKESKK). Positions 53–76 (ALEGWLGPEDSGEVEGTEDKLEIR) are cleaved as a propeptide — removed in mature form. Leu-99 carries the post-translational modification Leucine amide. The propeptide at 100–118 (GKFLQDILWEEVTEAPADK) is removed in mature form.

This sequence belongs to the motilin family. O-octanoylated by GOAT/MBOAT4. O-octanoylation is essential for ghrelin activity. In terms of processing, amidation of Leu-99 is essential for obestatin activity.

Its subcellular location is the secreted. In terms of biological role, ghrelin is the ligand for growth hormone secretagogue receptor type 1 (GHSR). Induces the release of growth hormone from the pituitary. Has an appetite-stimulating effect, induces adiposity and stimulates gastric acid secretion. Involved in growth regulation. Functionally, obestatin may be the ligand for GPR39. May have an appetite-reducing effect resulting in decreased food intake. May reduce gastric emptying activity and jejunal motility. This chain is Appetite-regulating hormone (GHRL), found in Sus scrofa (Pig).